A 432-amino-acid polypeptide reads, in one-letter code: Glutamyl-tRNA reductase (432 aa).

Residues 55–58 (TCNR), serine 114, 119–121 (ETQ), and glutamine 125 each bind substrate. Cysteine 56 functions as the Nucleophile in the catalytic mechanism. Residue 194–199 (GAGEMI) coordinates NADP(+).

It belongs to the glutamyl-tRNA reductase family. In terms of assembly, homodimer.

It catalyses the reaction (S)-4-amino-5-oxopentanoate + tRNA(Glu) + NADP(+) = L-glutamyl-tRNA(Glu) + NADPH + H(+). It functions in the pathway porphyrin-containing compound metabolism; protoporphyrin-IX biosynthesis; 5-aminolevulinate from L-glutamyl-tRNA(Glu): step 1/2. Functionally, catalyzes the NADPH-dependent reduction of glutamyl-tRNA(Glu) to glutamate 1-semialdehyde (GSA). In Burkholderia pseudomallei (strain 1710b), this protein is Glutamyl-tRNA reductase.